Here is a 458-residue protein sequence, read N- to C-terminus: tRNA modification GTPase MnmE (458 aa).

Positions 22, 85, and 124 each coordinate (6S)-5-formyl-5,6,7,8-tetrahydrofolate. The TrmE-type G domain occupies 220-379; it reads GIKTVIVGRP…LEEHISELVF (160 aa). Asn230 contacts K(+). GTP contacts are provided by residues 230 to 235, 249 to 255, and 274 to 277; these read NVGKSS, TEIPGTT, and DTAG. Position 234 (Ser234) interacts with Mg(2+). Residues Thr249, Ile251, and Thr254 each contribute to the K(+) site. Thr255 contributes to the Mg(2+) binding site. Lys458 is a binding site for (6S)-5-formyl-5,6,7,8-tetrahydrofolate.

Belongs to the TRAFAC class TrmE-Era-EngA-EngB-Septin-like GTPase superfamily. TrmE GTPase family. As to quaternary structure, homodimer. Heterotetramer of two MnmE and two MnmG subunits. K(+) serves as cofactor.

The protein localises to the cytoplasm. Exhibits a very high intrinsic GTPase hydrolysis rate. Involved in the addition of a carboxymethylaminomethyl (cmnm) group at the wobble position (U34) of certain tRNAs, forming tRNA-cmnm(5)s(2)U34. This chain is tRNA modification GTPase MnmE, found in Natranaerobius thermophilus (strain ATCC BAA-1301 / DSM 18059 / JW/NM-WN-LF).